The chain runs to 865 residues: MVASARVQKLVRRYKLAIATALAILLLQGLVVWSFSGLEEDEAGEKGRQRKPRPLDPGEGSKDTDSSAGRRGSTGRRHGRWRGRAESPGVPVAKVVRAVTSRQRASRRVPPAPPPEAPGRQNLSGAAAGEALVGAAGFPPHGDTGSVEGAPQPTDNGFTPKCEIVGKDALSALARASTKQCQQEIANVVCLHQAGSLMPKAVPRHCQLTGKMSPGIQWDESQAQQPMDGPPVRIAYMLVVHGRAIRQLKRLLKAVYHEQHFFYIHVDKRSDYLHREVVELAQGYDNVRVTPWRMVTIWGGASLLRMYLRSMRDLLEVPGWAWDFFINLSATDYPTRTNEELVAFLSKNRDKNFLKSHGRDNSRFIKKQGLDRLFHECDSHMWRLGERQIPAGIVVDGGSDWFVLTRSFVEYVVYTDDPLVAQLRQFYTYTLLPAESFFHTVLENSLACETLVDNNLRVTNWNRKLGCKCQYKHIVDWCGCSPNDFKPQDFLRLQQVSRPTFFARKFESTVNQEVLEILDFHLYGSYPPGTPALKAYWENTYDAADGPSGLSDVMLTAYTAFARLSLHHAATAAPPMGTPLCRFEPRGLPSSVHLYFYDDHFQGYLVTQAVQPSAQGPAETLEMWLMPQGSLKLLGRSDQASRLQSLEVGTDWDPKERLFRNFGGLLGPLDEPVAVQRWARGPNLTATVVWIDPTYVVATSYDITVDTETEVTQYKPPLSRPLRPGPWTVRLLQFWEPLGETRFLVLPLTFNRKLPLRKDDASWLHAGPPHNEYMEQSFQGLSSILNLPQPELAEEAAQRHTQLTGPALEAWTDRELSSFWSVAGLCAIGPSPCPSLEPCRLTSWSSLSPDPKSELGPVKADGRLR.

Over 1–15 (MVASARVQKLVRRYK) the chain is Cytoplasmic. The chain crosses the membrane as a helical; Signal-anchor for type II membrane protein span at residues 16-36 (LAIATALAILLLQGLVVWSFS). Residues 37–865 (GLEEDEAGEK…GPVKADGRLR (829 aa)) lie on the Lumenal side of the membrane. The interval 41-157 (DEAGEKGRQR…EGAPQPTDNG (117 aa)) is disordered. Basic and acidic residues predominate over residues 53-65 (RPLDPGEGSKDTD). A compositionally biased stretch (basic residues) spans 73 to 82 (STGRRHGRWR). Asn-122 carries N-linked (GlcNAc...) asparagine glycosylation. Over residues 125 to 137 (GAAAGEALVGAAG) the composition is skewed to low complexity. Disulfide bonds link Cys-162/Cys-190, Cys-206/Cys-448, Cys-467/Cys-480, and Cys-469/Cys-478. UDP-alpha-D-xylose-binding positions include Val-239, Asp-267, and 296-298 (TIW). Asn-327 is a glycosylation site (N-linked (GlcNAc...) asparagine). 400 to 401 (DW) serves as a coordination point for UDP-alpha-D-xylose. UDP-alpha-D-xylose contacts are provided by residues Ser-481 and 504-505 (RK). Cystine bridges form between Cys-581/Cys-833 and Cys-826/Cys-839. Asn-683 is a glycosylation site (N-linked (GlcNAc...) asparagine). A disordered region spans residues 846–865 (SLSPDPKSELGPVKADGRLR).

The protein belongs to the glycosyltransferase 14 family. XylT subfamily. In terms of assembly, monomer. The cofactor is Mg(2+). Mn(2+) serves as cofactor. Post-translationally, contains disulfide bonds. Widely expressed. Expressed at higher level in kidney and pancreas.

It localises to the golgi apparatus membrane. Its subcellular location is the secreted. The enzyme catalyses UDP-alpha-D-xylose + L-seryl-[protein] = 3-O-(beta-D-xylosyl)-L-seryl-[protein] + UDP + H(+). Its pathway is glycan metabolism; chondroitin sulfate biosynthesis. It participates in glycan metabolism; heparan sulfate biosynthesis. Functionally, catalyzes the first step in the biosynthesis of chondroitin sulfate, heparan sulfate and dermatan sulfate proteoglycans, such as DCN. Transfers D-xylose from UDP-D-xylose to specific serine residues of the core protein. The protein is Xylosyltransferase 2 (XYLT2) of Homo sapiens (Human).